Reading from the N-terminus, the 87-residue chain is U1-theraphotoxin-Ct1a (87 aa).

The first 23 residues, 1-23, serve as a signal peptide directing secretion; it reads MKTFTLIAILTCAVLVIFHAAAA. A propeptide spanning residues 24-48 is cleaved from the precursor; sequence EELEVQDVIQPEDTLTGLATLDEDR.

The protein belongs to the neurotoxin 12 (Hwtx-2) family. 03 (juruin) subfamily. Contains 3 disulfide bonds. Two different connectivities are observed in similar proteins (C1-C3, C2-C5, C4-C6 or C1-C4, C2-C5, C3-C6). Expressed by the venom gland.

It is found in the secreted. This toxin causes paralysis and death to sheep blowflies. It may inhibit voltage-gated calcium channels. The sequence is that of U1-theraphotoxin-Ct1a from Coremiocnemis tropix (Australian tarantula spider).